We begin with the raw amino-acid sequence, 433 residues long: Mitochondrial inner membrane protein OXA1L (433 aa).

Over 1 to 108 (MARNLVCGRW…QCATEPSFTE (108 aa)) the chain is Mitochondrial intermembrane. Residues 109 to 129 (LGLGSYTPVGLIQNLLEYIHV) form a helical membrane-spanning segment. Residues 130–134 (DLGLP) lie on the Mitochondrial matrix side of the membrane. The chain crosses the membrane as a helical span at residues 135 to 155 (WWGAIATCTVLARCLVFPLIV). At 156–207 (KGQREAAKIHNHMPEMQKFSARIREAKLAGDQAEFYKATIEMTRYQKKHDIK) the chain is on the mitochondrial intermembrane side. A helical membrane pass occupies residues 208–228 (LLRPLILPLTQAPVFISFFIA). At 229–255 (LREMANLPVPSLQTGGLWWFQDLTVSD) the chain is on the mitochondrial matrix side. A helical membrane pass occupies residues 256 to 276 (PIYVLPLVVTATMWCVLELGA). The Mitochondrial intermembrane portion of the chain corresponds to 277 to 293 (ETGVQSNDLQFMRNIIR). Residues 294–314 (VMPLVVLPVTIHFPSAVFMYW) traverse the membrane as a helical segment. Residues 315–433 (LSSNVFSLCQ…AKKPWQDTLG (119 aa)) are Mitochondrial matrix-facing. A Phosphoserine modification is found at Ser-359. A phosphothreonine mark is found at Thr-395 and Thr-397. The tract at residues 397–433 (THNPLLQHDPSHPPKAPNSNNSSIKANAKKPWQDTLG) is disordered. The segment covering 413-426 (PNSNNSSIKANAKK) has biased composition (low complexity).

The protein belongs to the OXA1/ALB3/YidC family. In terms of assembly, monomer; predominantly monomeric at low salt concentrations. Homooligomer; predominantly homooligomeric at high salt concentrations. Associates with the mitochondrial ribosome. Associates preferentially as a dimer with the large ribosomal subunit 39S of the mitochondrial ribosome. Interacts with OXA1L; promoting cotranslational quality control in mitochondria.

It localises to the mitochondrion inner membrane. Functionally, mitochondrial membrane insertase that mediates the cotranslational insertion of integral membrane proteins into the mitochondrial inner membrane. Essential for the activity and assembly of cytochrome oxidase. Required for the correct biogenesis of ATP synthase and complex I in mitochondria. In Mus musculus (Mouse), this protein is Mitochondrial inner membrane protein OXA1L (Oxa1l).